Consider the following 331-residue polypeptide: Pantothenate kinase (331 aa).

G109 to S116 contributes to the ATP binding site.

This sequence belongs to the prokaryotic pantothenate kinase family.

The protein resides in the cytoplasm. The enzyme catalyses (R)-pantothenate + ATP = (R)-4'-phosphopantothenate + ADP + H(+). It participates in cofactor biosynthesis; coenzyme A biosynthesis; CoA from (R)-pantothenate: step 1/5. This Rhizobium rhizogenes (strain K84 / ATCC BAA-868) (Agrobacterium radiobacter) protein is Pantothenate kinase.